We begin with the raw amino-acid sequence, 343 residues long: Lactamase-like protein nscB (343 aa).

4 residues coordinate Zn(2+): histidine 118, histidine 120, aspartate 122, and histidine 123. Aspartate 122 serves as the catalytic Proton donor/acceptor.

The protein belongs to the metallo-beta-lactamase superfamily. Zn(2+) is required as a cofactor.

It participates in secondary metabolite biosynthesis. Its function is as follows. Lactamase-like protein; part of the gene cluster that mediates the biosynthesis of neosartoricin B, a prenylated anthracenone that probably exhibits T-cell antiproliferative activity, suggestive of a physiological role as an immunosuppressive agent. The non-reducing polyketide synthase nscA probably synthesizes and cyclizes the decaketide backbone. The hydrolase nscB then mediates the product release through hydrolysis followed by spontaneous decarboxylation. The prenyltransferase nscD catalyzes the addition of the dimethylallyl group to the aromatic C5. The FAD-dependent monooxygenase nscC is then responsible for the stereospecific hydroxylation at C2. Neosartoricin B can be converted into two additional compounds neosartoricins C and D. Neosartoricin C is a spirocyclic compound that is cyclized through the attack of C3 hydroxyl on C14, followed by dehydration. On the other hand, neosartoricin D is a further cyclized compound in which attack of C2 on C14 in neosartoricin C results in the formation of the acetal-containing dioxabicyclo-octanone ring. Both of these compounds are novel and possibly represent related metabolites of the gene cluster. The sequence is that of Lactamase-like protein nscB from Arthroderma otae (strain ATCC MYA-4605 / CBS 113480) (Microsporum canis).